A 67-amino-acid polypeptide reads, in one-letter code: Small ribosomal subunit protein bS21 (67 aa).

It belongs to the bacterial ribosomal protein bS21 family.

The chain is Small ribosomal subunit protein bS21 from Hydrogenobaculum sp. (strain Y04AAS1).